Reading from the N-terminus, the 772-residue chain is Mitochondrial intermediate peptidase (772 aa).

A mitochondrion-targeting transit peptide spans 1–37 (MLRTIILKAGSNASIPSLSRQNKLLRFFATAGAVSRT). Histidine 558 provides a ligand contact to Zn(2+). The active site involves glutamate 559. Zn(2+)-binding residues include histidine 562 and histidine 565.

Belongs to the peptidase M3 family. It depends on Zn(2+) as a cofactor.

It localises to the mitochondrion matrix. It carries out the reaction Release of an N-terminal octapeptide as second stage of processing of some proteins imported into the mitochondrion.. Stimulated by Fe(2+). In terms of biological role, cleaves proteins, imported into the mitochondrion, to their mature size. While most mitochondrial precursor proteins are processed to the mature form in one step by mitochondrial processing peptidase (MPP), the sequential cleavage by MIP of an octapeptide after initial processing by MPP is a required step for a subgroup of nuclear-encoded precursor proteins destined for the matrix or the inner membrane. Cleaves precursor proteins of respiratory components, including subunits of the electron transport chain and tricarboxylic acid cycle enzymes, and components of the mitochondrial genetic machinery, including ribosomal proteins, translation factors, and proteins required for mitochondrial DNA metabolism. The polypeptide is Mitochondrial intermediate peptidase (OCT1) (Saccharomyces cerevisiae (strain YJM789) (Baker's yeast)).